The following is a 148-amino-acid chain: Large ribosomal subunit protein bL9 (148 aa).

The protein belongs to the bacterial ribosomal protein bL9 family.

Its function is as follows. Binds to the 23S rRNA. The protein is Large ribosomal subunit protein bL9 of Caldicellulosiruptor saccharolyticus (strain ATCC 43494 / DSM 8903 / Tp8T 6331).